A 330-amino-acid chain; its full sequence is Phospho-N-acetylmuramoyl-pentapeptide-transferase (330 aa).

The next 10 membrane-spanning stretches (helical) occupy residues 3-23, 49-69, 71-91, 111-131, 145-165, 179-199, 204-224, 228-248, 256-276, and 307-327; these read SVVL…SSFI, TPTM…AVVA, PNPA…VGLY, FLLL…YVGV, VLGP…FVIV, GLAA…AFLE, LAII…YNSH, IFMG…AAIL, PVIG…VVVF, and FWIV…FFLY.

This sequence belongs to the glycosyltransferase 4 family. MraY subfamily. Requires Mg(2+) as cofactor.

It localises to the cell membrane. It catalyses the reaction UDP-N-acetyl-alpha-D-muramoyl-L-alanyl-gamma-D-glutamyl-meso-2,6-diaminopimeloyl-D-alanyl-D-alanine + di-trans,octa-cis-undecaprenyl phosphate = di-trans,octa-cis-undecaprenyl diphospho-N-acetyl-alpha-D-muramoyl-L-alanyl-D-glutamyl-meso-2,6-diaminopimeloyl-D-alanyl-D-alanine + UMP. It functions in the pathway cell wall biogenesis; peptidoglycan biosynthesis. Catalyzes the initial step of the lipid cycle reactions in the biosynthesis of the cell wall peptidoglycan: transfers peptidoglycan precursor phospho-MurNAc-pentapeptide from UDP-MurNAc-pentapeptide onto the lipid carrier undecaprenyl phosphate, yielding undecaprenyl-pyrophosphoryl-MurNAc-pentapeptide, known as lipid I. In Rubrobacter xylanophilus (strain DSM 9941 / JCM 11954 / NBRC 16129 / PRD-1), this protein is Phospho-N-acetylmuramoyl-pentapeptide-transferase.